The following is a 745-amino-acid chain: Inhibitor of nuclear factor kappa-B kinase subunit alpha (745 aa).

The Protein kinase domain occupies 15-302 (WEMRERLGTG…LTLKQPRCFV (288 aa)). ATP contacts are provided by residues 21-29 (LGTGGFGNV) and Lys44. A Phosphothreonine; by PKB/AKT1 and SGK1 modification is found at Thr23. The active-site Proton acceptor is Asp144. Position 176 is a phosphoserine; by MAP3K14 (Ser176). Thr179 bears the (Microbial infection) O-acetylthreonine; by Yersinia YopJ mark. At Ser180 the chain carries Phosphoserine; by SGK1. Residues 455 to 476 (LLRYNANLTKMKNTLISASQQL) form a leucine-zipper region. The segment at 738–743 (LDWSWL) is NEMO-binding.

It belongs to the protein kinase superfamily. Ser/Thr protein kinase family. I-kappa-B kinase subfamily. In terms of assembly, component of the I-kappa-B-kinase (IKK) core complex consisting of CHUK, IKBKB and IKBKG; probably four alpha/CHUK-beta/IKBKB dimers are associated with four gamma/IKBKG subunits. The IKK core complex seems to associate with regulatory or adapter proteins to form a IKK-signalosome holo-complex. The IKK complex associates with TERF2IP/RAP1, leading to promote IKK-mediated phosphorylation of RELA/p65. Part of a complex composed of NCOA2, NCOA3, CHUK/IKKA, IKBKB, IKBKG and CREBBP. Part of a 70-90 kDa complex at least consisting of CHUK/IKKA, IKBKB, NFKBIA, RELA, ELP1 and MAP3K14. Directly interacts with TRPC4AP. May interact with TRAF2. Interacts with NALP2. May interact with MAVS/IPS1. Interacts with ARRB1 and ARRB2. Interacts with NLRC5; prevents CHUK phosphorylation and kinase activity. Interacts with PIAS1; this interaction induces PIAS1 phosphorylation. Interacts with ZNF268 isoform 2; the interaction is further increased in a TNF-alpha-dependent manner. Interacts with FOXO3. Interacts with IFIT5; the interaction synergizes the recruitment of IKK to MAP3K7 and enhances IKK phosphorylation. Interacts with LRRC14. Interacts with SASH1. Directly interacts with DDX3X after the physiological activation of the TLR7 and TLR8 pathways; this interaction enhances CHUK autophosphorylation. As to quaternary structure, (Microbial infection) Interacts with InlC of Listeria monocytogenes. Post-translationally, phosphorylated by MAP3K14/NIK, AKT and to a lesser extent by MEKK1, and dephosphorylated by PP2A. Autophosphorylated. Ubiquitinated by TRIM56 via 'Lys-63'-linked ubiquitination, promoting activation of CHUK/IKKA. In terms of processing, (Microbial infection) Acetylation of Thr-179 by Yersinia YopJ prevents phosphorylation and activation, thus blocking the I-kappa-B signaling pathway. In terms of tissue distribution, widely expressed.

It localises to the cytoplasm. Its subcellular location is the nucleus. The enzyme catalyses L-seryl-[I-kappa-B protein] + ATP = O-phospho-L-seryl-[I-kappa-B protein] + ADP + H(+). With respect to regulation, activated when phosphorylated and inactivated when dephosphorylated. In terms of biological role, serine kinase that plays an essential role in the NF-kappa-B signaling pathway which is activated by multiple stimuli such as inflammatory cytokines, bacterial or viral products, DNA damages or other cellular stresses. Acts as a part of the canonical IKK complex in the conventional pathway of NF-kappa-B activation and phosphorylates inhibitors of NF-kappa-B on serine residues. These modifications allow polyubiquitination of the inhibitors and subsequent degradation by the proteasome. In turn, free NF-kappa-B is translocated into the nucleus and activates the transcription of hundreds of genes involved in immune response, growth control, or protection against apoptosis. Negatively regulates the pathway by phosphorylating the scaffold protein TAXBP1 and thus promoting the assembly of the A20/TNFAIP3 ubiquitin-editing complex (composed of A20/TNFAIP3, TAX1BP1, and the E3 ligases ITCH and RNF11). Therefore, CHUK plays a key role in the negative feedback of NF-kappa-B canonical signaling to limit inflammatory gene activation. As part of the non-canonical pathway of NF-kappa-B activation, the MAP3K14-activated CHUK/IKKA homodimer phosphorylates NFKB2/p100 associated with RelB, inducing its proteolytic processing to NFKB2/p52 and the formation of NF-kappa-B RelB-p52 complexes. In turn, these complexes regulate genes encoding molecules involved in B-cell survival and lymphoid organogenesis. Also participates in the negative feedback of the non-canonical NF-kappa-B signaling pathway by phosphorylating and destabilizing MAP3K14/NIK. Within the nucleus, phosphorylates CREBBP and consequently increases both its transcriptional and histone acetyltransferase activities. Modulates chromatin accessibility at NF-kappa-B-responsive promoters by phosphorylating histones H3 at 'Ser-10' that are subsequently acetylated at 'Lys-14' by CREBBP. Additionally, phosphorylates the CREBBP-interacting protein NCOA3. Also phosphorylates FOXO3 and may regulate this pro-apoptotic transcription factor. Phosphorylates RIPK1 at 'Ser-25' which represses its kinase activity and consequently prevents TNF-mediated RIPK1-dependent cell death. Phosphorylates AMBRA1 following mitophagy induction, promoting AMBRA1 interaction with ATG8 family proteins and its mitophagic activity. The sequence is that of Inhibitor of nuclear factor kappa-B kinase subunit alpha (CHUK) from Homo sapiens (Human).